The sequence spans 348 residues: NADH-quinone oxidoreductase subunit H (348 aa).

Helical transmembrane passes span 7-27, 82-102, 115-135, 161-181, 199-219, 251-271, 287-307, and 322-342; these read IWLL…VVLL, GVFL…WAVI, VGLL…IMGG, IGFV…TTIV, FLDW…ISAL, LFFL…TILF, VPGI…FAMV, and LGWK…ATFL.

The protein belongs to the complex I subunit 1 family. NDH-1 is composed of 14 different subunits. Subunits NuoA, H, J, K, L, M, N constitute the membrane sector of the complex.

It is found in the cell inner membrane. It carries out the reaction a quinone + NADH + 5 H(+)(in) = a quinol + NAD(+) + 4 H(+)(out). Its function is as follows. NDH-1 shuttles electrons from NADH, via FMN and iron-sulfur (Fe-S) centers, to quinones in the respiratory chain. The immediate electron acceptor for the enzyme in this species is believed to be ubiquinone. Couples the redox reaction to proton translocation (for every two electrons transferred, four hydrogen ions are translocated across the cytoplasmic membrane), and thus conserves the redox energy in a proton gradient. This subunit may bind ubiquinone. The chain is NADH-quinone oxidoreductase subunit H from Bartonella quintana (strain Toulouse) (Rochalimaea quintana).